We begin with the raw amino-acid sequence, 322 residues long: Serine protease 38 (322 aa).

The first 28 residues, 1 to 28 (MAALTSGLGVLGYLLFPLLLASPTWVTS), serve as a signal peptide directing secretion. A propeptide spans 29–55 (VSRRHPKSQANSLSGDVACGQPVLQGK) (activation peptide). The Peptidase S1 domain occupies 56 to 289 (LLGGEFARDR…FLSWIRYHLQ (234 aa)). An intrachain disulfide couples cysteine 81 to cysteine 97. Active-site charge relay system residues include histidine 96 and aspartate 146. The N-linked (GlcNAc...) asparagine glycan is linked to asparagine 176. Cystine bridges form between cysteine 179–cysteine 247, cysteine 210–cysteine 226, and cysteine 237–cysteine 265. Serine 241 acts as the Charge relay system in catalysis. Residues asparagine 250 and asparagine 276 are each glycosylated (N-linked (GlcNAc...) asparagine).

The protein belongs to the peptidase S1 family.

Its subcellular location is the secreted. This chain is Serine protease 38 (Prss38), found in Mus musculus (Mouse).